A 261-amino-acid chain; its full sequence is 5'-nucleotidase SurE (261 aa).

Residues Asp8, Asp9, Ser43, and Asn96 each contribute to the a divalent metal cation site.

It belongs to the SurE nucleotidase family. The cofactor is a divalent metal cation.

The protein localises to the cytoplasm. It catalyses the reaction a ribonucleoside 5'-phosphate + H2O = a ribonucleoside + phosphate. Functionally, nucleotidase that shows phosphatase activity on nucleoside 5'-monophosphates. The chain is 5'-nucleotidase SurE from Roseobacter denitrificans (strain ATCC 33942 / OCh 114) (Erythrobacter sp. (strain OCh 114)).